The sequence spans 200 residues: Lipopolysaccharide core heptose(II)-phosphate phosphatase (200 aa).

Positions 1-25 (MLAFCRSSLKSKKYFIILLALAAIA) are cleaved as a signal peptide.

Belongs to the phosphoglycerate mutase family. Ais subfamily.

It localises to the periplasm. Its pathway is bacterial outer membrane biogenesis; lipopolysaccharide metabolism. Its function is as follows. Catalyzes the dephosphorylation of heptose(II) of the outer membrane lipopolysaccharide core. This chain is Lipopolysaccharide core heptose(II)-phosphate phosphatase, found in Escherichia coli (strain SE11).